The sequence spans 62 residues: Chromatin protein Cren7 (62 aa).

The protein belongs to the Cren7 family. Monomer. Post-translationally, methylated at multiple sites, to varying extents.

It localises to the chromosome. It is found in the cytoplasm. A chromatin protein, binds double-stranded DNA without sequence specificity. Constrains negative DNA supercoils. The sequence is that of Chromatin protein Cren7 from Staphylothermus marinus (strain ATCC 43588 / DSM 3639 / JCM 9404 / F1).